A 319-amino-acid chain; its full sequence is Glutamyl-Q tRNA(Asp) synthetase (319 aa).

Residues 23-27 and E59 each bind L-glutamate; that span reads RFAPS. Residues 26–36 carry the 'HIGH' region motif; sequence PSPSGPLHAGS. Residues C115, C117, Y139, and C143 each coordinate Zn(2+). The L-glutamate site is built by Y197 and R215. Positions 254-258 match the 'KMSKS' region motif; sequence KLSKQ. K257 is an ATP binding site.

It belongs to the class-I aminoacyl-tRNA synthetase family. GluQ subfamily. Zn(2+) serves as cofactor.

Its function is as follows. Catalyzes the tRNA-independent activation of glutamate in presence of ATP and the subsequent transfer of glutamate onto a tRNA(Asp). Glutamate is transferred on the 2-amino-5-(4,5-dihydroxy-2-cyclopenten-1-yl) moiety of the queuosine in the wobble position of the QUC anticodon. In Bordetella bronchiseptica (strain ATCC BAA-588 / NCTC 13252 / RB50) (Alcaligenes bronchisepticus), this protein is Glutamyl-Q tRNA(Asp) synthetase.